The primary structure comprises 400 residues: General L-amino acid transport system permease protein AapQ (400 aa).

8 helical membrane passes run 29–49, 100–120, 142–162, 188–208, 225–245, 264–284, 340–360, and 367–387; these read SIFY…WVAH, LLVA…IGIG, IPPL…LPQP, TGMI…IIIA, VWTA…VSGF, VVGP…ASFI, NSSL…GTIL, and IEIV…TSLF. The 293-residue stretch at 96-388 folds into the ABC transmembrane type-1 domain; it reads ILNTLLVAVT…SLSILTSLFM (293 aa).

It belongs to the binding-protein-dependent transport system permease family. HisMQ subfamily.

It localises to the cell inner membrane. Functionally, part of a binding-protein-dependent transport system for L-amino acids, affects the uptake as well as efflux of these amino acids. Probably responsible for the translocation of the substrate across the membrane. The sequence is that of General L-amino acid transport system permease protein AapQ (aapQ) from Rhizobium johnstonii (strain DSM 114642 / LMG 32736 / 3841) (Rhizobium leguminosarum bv. viciae).